Here is a 757-residue protein sequence, read N- to C-terminus: Glutathione biosynthesis bifunctional protein GshAB (757 aa).

The interval 1-337 (MNIQQIVKEK…LGRARLGEVA (337 aa)) is glutamate--cysteine ligase. In terms of domain architecture, ATP-grasp spans 494–757 (KKVLAKAGFN…VLGMLFPELV (264 aa)). 521–580 (PLFEGKAVVIKPKSTNFGLGISIFQQGVHDKADFAKAVEIAFREDKEVMVEDYLVGTEYR) provides a ligand contact to ATP. Mg(2+) contacts are provided by aspartate 702, glutamate 723, and asparagine 725. Aspartate 702, glutamate 723, and asparagine 725 together coordinate Mn(2+).

The protein in the N-terminal section; belongs to the glutamate--cysteine ligase type 1 family. Type 2 subfamily. As to quaternary structure, monomer. It depends on Mg(2+) as a cofactor. Requires Mn(2+) as cofactor.

The catalysed reaction is L-cysteine + L-glutamate + ATP = gamma-L-glutamyl-L-cysteine + ADP + phosphate + H(+). It catalyses the reaction gamma-L-glutamyl-L-cysteine + glycine + ATP = glutathione + ADP + phosphate + H(+). Its pathway is sulfur metabolism; glutathione biosynthesis; glutathione from L-cysteine and L-glutamate: step 1/2. It participates in sulfur metabolism; glutathione biosynthesis; glutathione from L-cysteine and L-glutamate: step 2/2. Synthesizes glutathione from L-glutamate and L-cysteine via gamma-L-glutamyl-L-cysteine. In Mannheimia succiniciproducens (strain KCTC 0769BP / MBEL55E), this protein is Glutathione biosynthesis bifunctional protein GshAB.